Consider the following 108-residue polypeptide: Thiosulfate sulfurtransferase GlpE (108 aa).

The region spanning 17–105 is the Rhodanese domain; sequence RQGAAVLVDI…WHRRFPANVA (89 aa). The active-site Cysteine persulfide intermediate is C65.

Belongs to the GlpE family.

It localises to the cytoplasm. It catalyses the reaction thiosulfate + hydrogen cyanide = thiocyanate + sulfite + 2 H(+). It carries out the reaction thiosulfate + [thioredoxin]-dithiol = [thioredoxin]-disulfide + hydrogen sulfide + sulfite + 2 H(+). Functionally, transferase that catalyzes the transfer of sulfur from thiosulfate to thiophilic acceptors such as cyanide or dithiols. May function in a CysM-independent thiosulfate assimilation pathway by catalyzing the conversion of thiosulfate to sulfite, which can then be used for L-cysteine biosynthesis. The chain is Thiosulfate sulfurtransferase GlpE from Salmonella agona (strain SL483).